Consider the following 196-residue polypeptide: Serine/arginine-rich splicing factor RSZ22A (196 aa).

Residues 2–71 (SRVYVGNLDP…NGWRVEQSHN (70 aa)) enclose the RRM domain. Ser-48 is modified (phosphoserine). Residues 58–70 (VDGKNGWRVEQSH) are compositionally biased toward basic and acidic residues. Positions 58–196 (VDGKNGWRVE…GLKDVRRSRS (139 aa)) are disordered. Over residues 72–87 (RGGGGGRGGGRGGGDG) the composition is skewed to gly residues. Residues 88–100 (GRGRGGSDLKCYE) show a composition bias toward basic and acidic residues. The CCHC-type zinc finger occupies 96–113 (LKCYECGESGHFARECRS). Residues 119 to 135 (GRRRSRSRSRSPPRYRK) show a composition bias toward basic residues. Phosphoserine is present on residues Ser-136, Ser-144, Ser-146, Ser-151, Ser-159, Ser-170, and Ser-196. Over residues 139–149 (YGGRRSYSPRA) the composition is skewed to low complexity.

It belongs to the splicing factor SR family. RSZ subfamily. As to quaternary structure, component of the spliceosome. Post-translationally, extensively phosphorylated on serine residues in the RS domain.

It is found in the nucleus. Its function is as follows. Probably involved in intron recognition and spliceosome assembly. This chain is Serine/arginine-rich splicing factor RSZ22A (RSZ22A), found in Arabidopsis thaliana (Mouse-ear cress).